A 402-amino-acid polypeptide reads, in one-letter code: S-adenosylmethionine synthase (402 aa).

137–142 (GQGSAD) is a binding site for ATP.

Belongs to the AdoMet synthase 2 family. Mg(2+) is required as a cofactor.

The catalysed reaction is L-methionine + ATP + H2O = S-adenosyl-L-methionine + phosphate + diphosphate. Its pathway is amino-acid biosynthesis; S-adenosyl-L-methionine biosynthesis; S-adenosyl-L-methionine from L-methionine: step 1/1. In terms of biological role, catalyzes the formation of S-adenosylmethionine from methionine and ATP. This chain is S-adenosylmethionine synthase, found in Pyrobaculum aerophilum (strain ATCC 51768 / DSM 7523 / JCM 9630 / CIP 104966 / NBRC 100827 / IM2).